Consider the following 122-residue polypeptide: Large ribosomal subunit protein uL14 (122 aa).

This sequence belongs to the universal ribosomal protein uL14 family. Part of the 50S ribosomal subunit. Forms a cluster with proteins L3 and L19. In the 70S ribosome, L14 and L19 interact and together make contacts with the 16S rRNA in bridges B5 and B8.

In terms of biological role, binds to 23S rRNA. Forms part of two intersubunit bridges in the 70S ribosome. The sequence is that of Large ribosomal subunit protein uL14 from Streptococcus agalactiae serotype Ia (strain ATCC 27591 / A909 / CDC SS700).